The primary structure comprises 276 residues: Protein-glutamine gamma-glutamyltransferase (276 aa).

Belongs to the bacillus TGase family.

It carries out the reaction L-glutaminyl-[protein] + L-lysyl-[protein] = [protein]-L-lysyl-N(6)-5-L-glutamyl-[protein] + NH4(+). Its function is as follows. Probably plays a role in the assembly of the spore coat proteins by catalyzing epsilon-(gamma-glutamyl)lysine cross-links. The chain is Protein-glutamine gamma-glutamyltransferase from Bacillus anthracis (strain A0248).